The sequence spans 118 residues: Small ribosomal subunit protein uS13 (118 aa).

Residues 91–118 (HRRGLPVRGQRTKTNARTRKGPRKPIKK) form a disordered region.

Belongs to the universal ribosomal protein uS13 family. Part of the 30S ribosomal subunit. Forms a loose heterodimer with protein S19. Forms two bridges to the 50S subunit in the 70S ribosome.

Functionally, located at the top of the head of the 30S subunit, it contacts several helices of the 16S rRNA. In the 70S ribosome it contacts the 23S rRNA (bridge B1a) and protein L5 of the 50S subunit (bridge B1b), connecting the 2 subunits; these bridges are implicated in subunit movement. Contacts the tRNAs in the A and P-sites. In Serratia proteamaculans (strain 568), this protein is Small ribosomal subunit protein uS13.